A 401-amino-acid chain; its full sequence is NADH-quinone oxidoreductase subunit D (401 aa).

Belongs to the complex I 49 kDa subunit family. In terms of assembly, NDH-1 is composed of 15 different subunits. Subunits NuoB, C, D, E, F, and G constitute the peripheral sector of the complex.

The protein localises to the cell membrane. The enzyme catalyses a quinone + NADH + 5 H(+)(in) = a quinol + NAD(+) + 4 H(+)(out). In terms of biological role, NDH-1 shuttles electrons from NADH, via FMN and iron-sulfur (Fe-S) centers, to quinones in the respiratory chain. The immediate electron acceptor for the enzyme in this species is believed to be a menaquinone. Couples the redox reaction to proton translocation (for every two electrons transferred, four hydrogen ions are translocated across the cytoplasmic membrane), and thus conserves the redox energy in a proton gradient. This is NADH-quinone oxidoreductase subunit D from Deinococcus radiodurans (strain ATCC 13939 / DSM 20539 / JCM 16871 / CCUG 27074 / LMG 4051 / NBRC 15346 / NCIMB 9279 / VKM B-1422 / R1).